Reading from the N-terminus, the 116-residue chain is Tyrosine-protein phosphatase 14 (116 aa).

Residues W1 to V116 form the Tyrosine-protein phosphatase domain. D84 lines the substrate pocket.

Belongs to the protein-tyrosine phosphatase family.

It carries out the reaction O-phospho-L-tyrosyl-[protein] + H2O = L-tyrosyl-[protein] + phosphate. The polypeptide is Tyrosine-protein phosphatase 14 (STY-14) (Styela plicata (Wrinkled sea squirt)).